The primary structure comprises 644 residues: MTSYTSSILSQISSPEDLKKLSCSELSLLAEQIRHKIISVLIKTGGHLASNLGIIELTIALHYVFSSPEDKFIFDVGHQTYTHKLLTGRNIEEFERIRHDGGLSGFTSPLESAHDLFFSGHAGNALSLALGMAKATEKSRTHVLPILGDAAFSCGLTFEALNNIHTDLSKFIVILNDNNMSISKNVGVMSKSLSQWIHHPKFSLLSRKLERSLSKIPRYGKSIAKCSHKISTCLRSLVCPIPIFEQFNLAYMGPVDGHDIKALVSLFQKVRDLPFPILIHVCTKKGKGLEIAQENPTKYHGVKANFKLTAEDKLLPTIQPQLTYPDIFGKTVCKLGEISPNLHVVTPAMSLGSRLETFKGTFPERFIDVGIAEGHAVTFSAGIAKANTPVICSIYSTFLHRAMDNVFHDVCLQNLPVIFGIDRAGLAYGDGCSHHGIYDLSFLRAMPNMIICQPRSSIVFQQLLQSSLHWQRPSAIRYPNIPALQGDPIATDINLYRDPGLGEILSQGEDVLIVGLGHMCSAALSIKLQLLSHGISATVVDPIFIKPFDNNLFSILLMHHSKVIIIEEHSIRGGLASEFNDFLATYNFKVDVLHFGIPDSIFSHGDKENLLQRVGLDVDSMVKRILTYFNFRTKKAPSNKLSIV.

Residues His-78 and 120 to 122 (GHA) contribute to the thiamine diphosphate site. Asp-149 lines the Mg(2+) pocket. Thiamine diphosphate contacts are provided by residues 150-151 (AA), Asn-178, and Glu-373. Position 178 (Asn-178) interacts with Mg(2+).

It belongs to the transketolase family. DXPS subfamily. As to quaternary structure, homodimer. Requires Mg(2+) as cofactor. Thiamine diphosphate is required as a cofactor.

The enzyme catalyses D-glyceraldehyde 3-phosphate + pyruvate + H(+) = 1-deoxy-D-xylulose 5-phosphate + CO2. It participates in metabolic intermediate biosynthesis; 1-deoxy-D-xylulose 5-phosphate biosynthesis; 1-deoxy-D-xylulose 5-phosphate from D-glyceraldehyde 3-phosphate and pyruvate: step 1/1. Catalyzes the acyloin condensation reaction between C atoms 2 and 3 of pyruvate and glyceraldehyde 3-phosphate to yield 1-deoxy-D-xylulose-5-phosphate (DXP). The chain is 1-deoxy-D-xylulose-5-phosphate synthase from Chlamydia abortus (strain DSM 27085 / S26/3) (Chlamydophila abortus).